A 960-amino-acid chain; its full sequence is Valine--tRNA ligase (960 aa).

The short motif at 42 to 52 (PNITGNLHMGH) is the 'HIGH' region element. Residues 553–557 (KMSKS) carry the 'KMSKS' region motif. Lys-556 is an ATP binding site. Residues 879–950 (VLKAIDKEIE…LSQQLESLHD (72 aa)) are a coiled coil.

Belongs to the class-I aminoacyl-tRNA synthetase family. ValS type 1 subfamily. As to quaternary structure, monomer.

It is found in the cytoplasm. It carries out the reaction tRNA(Val) + L-valine + ATP = L-valyl-tRNA(Val) + AMP + diphosphate. Functionally, catalyzes the attachment of valine to tRNA(Val). As ValRS can inadvertently accommodate and process structurally similar amino acids such as threonine, to avoid such errors, it has a 'posttransfer' editing activity that hydrolyzes mischarged Thr-tRNA(Val) in a tRNA-dependent manner. The chain is Valine--tRNA ligase from Buchnera aphidicola subsp. Schizaphis graminum (strain Sg).